The sequence spans 33 residues: Photosystem II reaction center protein Psb30 (33 aa).

Residues 5-25 (LIVQLGSLTLITLAGPLVVVL) form a helical membrane-spanning segment.

It belongs to the Psb30/Ycf12 family. As to quaternary structure, PSII is composed of 1 copy each of membrane proteins PsbA, PsbB, PsbC, PsbD, PsbE, PsbF, PsbH, PsbI, PsbJ, PsbK, PsbL, PsbM, PsbT, PsbY, PsbZ, Psb30/Ycf12, peripheral proteins of the oxygen-evolving complex and a large number of cofactors. It forms dimeric complexes.

The protein localises to the plastid. It localises to the chloroplast thylakoid membrane. In terms of biological role, a core subunit of photosystem II (PSII), probably helps stabilize the reaction center. The chain is Photosystem II reaction center protein Psb30 from Euglena deses.